A 316-amino-acid chain; its full sequence is UDP-N-acetylenolpyruvoylglucosamine reductase (316 aa).

Positions 27–225 constitute an FAD-binding PCMH-type domain; that stretch reads VGGKAERFYR…KTAINALLKK (199 aa). The active site involves R190. S239 (proton donor) is an active-site residue. Residue E309 is part of the active site.

This sequence belongs to the MurB family. Requires FAD as cofactor.

The protein localises to the cytoplasm. It catalyses the reaction UDP-N-acetyl-alpha-D-muramate + NADP(+) = UDP-N-acetyl-3-O-(1-carboxyvinyl)-alpha-D-glucosamine + NADPH + H(+). It participates in cell wall biogenesis; peptidoglycan biosynthesis. In terms of biological role, cell wall formation. The protein is UDP-N-acetylenolpyruvoylglucosamine reductase of Coxiella burnetii (strain RSA 331 / Henzerling II).